A 216-amino-acid polypeptide reads, in one-letter code: MTENEKHLYVARLDAAAEGFGLPKNDQAWSKLLDYLALLQKWNKTYNLTAIRDVDEMFIKHILDSLSVAPYIDSERLIDVGTGGGLPGIPLAILFPERQVDLLDSNSKKTRFLVQAKAELGLKNVEVVHHRVEAYHPETLYDGVVSRAFASLDDMLNWTHHLLKPQGHWWAMKAQKTQDEVAQLPNFAKMSQVFELHVPSLDAERTLIKIEKCQET.

S-adenosyl-L-methionine is bound by residues G81, L86, V132 to E133, and R147.

This sequence belongs to the methyltransferase superfamily. RNA methyltransferase RsmG family.

The protein localises to the cytoplasm. It carries out the reaction guanosine(527) in 16S rRNA + S-adenosyl-L-methionine = N(7)-methylguanosine(527) in 16S rRNA + S-adenosyl-L-homocysteine. In terms of biological role, specifically methylates the N7 position of guanine in position 527 of 16S rRNA. This chain is Ribosomal RNA small subunit methyltransferase G, found in Hydrogenovibrio crunogenus (strain DSM 25203 / XCL-2) (Thiomicrospira crunogena).